Consider the following 215-residue polypeptide: Pyridoxine/pyridoxamine 5'-phosphate oxidase (215 aa).

Residues 9–12 (RRDY) and lysine 69 contribute to the substrate site. FMN is bound by residues 64–69 (RVLLLK), 79–80 (FT), lysine 86, and glutamine 108. Substrate is bound by residues tyrosine 126, arginine 130, and serine 134. FMN is bound by residues 143 to 144 (QS) and tryptophan 188. 194 to 196 (RLH) contributes to the substrate binding site. Residue arginine 198 coordinates FMN.

It belongs to the pyridoxamine 5'-phosphate oxidase family. Homodimer. FMN is required as a cofactor.

The enzyme catalyses pyridoxamine 5'-phosphate + O2 + H2O = pyridoxal 5'-phosphate + H2O2 + NH4(+). It catalyses the reaction pyridoxine 5'-phosphate + O2 = pyridoxal 5'-phosphate + H2O2. The protein operates within cofactor metabolism; pyridoxal 5'-phosphate salvage; pyridoxal 5'-phosphate from pyridoxamine 5'-phosphate: step 1/1. It participates in cofactor metabolism; pyridoxal 5'-phosphate salvage; pyridoxal 5'-phosphate from pyridoxine 5'-phosphate: step 1/1. In terms of biological role, catalyzes the oxidation of either pyridoxine 5'-phosphate (PNP) or pyridoxamine 5'-phosphate (PMP) into pyridoxal 5'-phosphate (PLP). This is Pyridoxine/pyridoxamine 5'-phosphate oxidase from Pseudomonas syringae pv. tomato (strain ATCC BAA-871 / DC3000).